The sequence spans 416 residues: CC-adding tRNA nucleotidyltransferase (416 aa).

Residue 31–34 (GAVR) coordinates CTP. Residues Asp46 and Asp48 each coordinate Mg(2+). CTP is bound by residues 106 to 107 (RD), Asn111, 148 to 157 (DPLRLLRAYR), and Arg188.

Belongs to the tRNA nucleotidyltransferase/poly(A) polymerase family. Mg(2+) is required as a cofactor.

It catalyses the reaction a tRNA precursor + 2 CTP = a tRNA with a 3' CC end + 2 diphosphate. Its function is as follows. tRNA nucleotidyltransferase involved in the synthesis of the tRNA CCA terminus. Adds the two cytidine residues to tRNA. This is CC-adding tRNA nucleotidyltransferase from Synechocystis sp. (strain ATCC 27184 / PCC 6803 / Kazusa).